The sequence spans 141 residues: Small ribosomal subunit protein bS16 (141 aa).

Positions Thr-84–Ala-141 are disordered. Positions Ser-89–Glu-111 are enriched in basic and acidic residues. A compositionally biased stretch (low complexity) spans Ala-115–Ala-141.

The protein belongs to the bacterial ribosomal protein bS16 family.

The sequence is that of Small ribosomal subunit protein bS16 from Parvibaculum lavamentivorans (strain DS-1 / DSM 13023 / NCIMB 13966).